A 234-amino-acid polypeptide reads, in one-letter code: Large ribosomal subunit protein uL1 (234 aa).

This sequence belongs to the universal ribosomal protein uL1 family. As to quaternary structure, part of the 50S ribosomal subunit.

Functionally, binds directly to 23S rRNA. The L1 stalk is quite mobile in the ribosome, and is involved in E site tRNA release. Its function is as follows. Protein L1 is also a translational repressor protein, it controls the translation of the L11 operon by binding to its mRNA. This chain is Large ribosomal subunit protein uL1, found in Pseudoalteromonas translucida (strain TAC 125).